Reading from the N-terminus, the 321-residue chain is L-carnitine dehydrogenase (321 aa).

14-19 (GAGVIG) contacts NAD(+).

It belongs to the 3-hydroxyacyl-CoA dehydrogenase family. L-carnitine dehydrogenase subfamily. Homodimer.

It localises to the cytoplasm. The catalysed reaction is carnitine + NAD(+) = 3-dehydrocarnitine + NADH + H(+). It participates in amine and polyamine metabolism; carnitine metabolism. In terms of biological role, catalyzes the NAD(+)-dependent oxidation of L-carnitine to 3-dehydrocarnitine. The protein is L-carnitine dehydrogenase of Burkholderia mallei (strain ATCC 23344).